A 107-amino-acid polypeptide reads, in one-letter code: LSSQVTQELTALMDETMKELKAYKSELEEQLSPVAEETRARLSKELQAAQARLGADMEDVRSRLAQYRSEVQAMLGQSTDELRARLASHLRKLRKRLLRDVDDLQKR.

Repeat copies occupy residues 11–32 (ALMD…EQLS), 33–54 (PVAE…ARLG), 55–76 (ADME…AMLG), 77–98 (QSTD…KRLL), and 99–107 (RDVDDLQKR). The segment at 11–107 (ALMDETMKEL…LRDVDDLQKR (97 aa)) is 5 X 22 AA approximate tandem repeats. Met-74 is subject to Methionine sulfoxide. At Ser-78 the chain carries Phosphoserine. Residues 89 to 99 (HLRKLRKRLLR) are LDL and other lipoprotein receptors binding. 93 to 96 (LRKR) lines the heparin pocket.

This sequence belongs to the apolipoprotein A1/A4/E family. In terms of assembly, homotetramer. May interact with ABCA1; functionally associated with ABCA1 in the biogenesis of HDLs. May interact with APP/A4 amyloid-beta peptide; the interaction is extremely stable in vitro but its physiological significance is unclear. May interact with MAPT. May interact with MAP2. In the cerebrospinal fluid, interacts with secreted SORL1. Interacts with PMEL; this allows the loading of PMEL luminal fragment on ILVs to induce fibril nucleation. APOE exists as multiple glycosylated and sialylated glycoforms within cells and in plasma. The extent of glycosylation and sialylation are tissue and context specific. In terms of processing, glycated in plasma VLDL. Post-translationally, phosphorylated by FAM20C in the extracellular medium.

It is found in the secreted. The protein resides in the extracellular space. Its subcellular location is the extracellular matrix. It localises to the extracellular vesicle. The protein localises to the endosome. It is found in the multivesicular body. Its function is as follows. APOE is an apolipoprotein, a protein associating with lipid particles, that mainly functions in lipoprotein-mediated lipid transport between organs via the plasma and interstitial fluids. APOE is a core component of plasma lipoproteins and is involved in their production, conversion and clearance. Apolipoproteins are amphipathic molecules that interact both with lipids of the lipoprotein particle core and the aqueous environment of the plasma. As such, APOE associates with chylomicrons, chylomicron remnants, very low density lipoproteins (VLDL) and intermediate density lipoproteins (IDL) but shows a preferential binding to high-density lipoproteins (HDL). It also binds a wide range of cellular receptors including the LDL receptor/LDLR, the LDL receptor-related proteins LRP1, LRP2 and LRP8 and the very low-density lipoprotein receptor/VLDLR that mediate the cellular uptake of the APOE-containing lipoprotein particles. Finally, APOE also has a heparin-binding activity and binds heparan-sulfate proteoglycans on the surface of cells, a property that supports the capture and the receptor-mediated uptake of APOE-containing lipoproteins by cells. A main function of APOE is to mediate lipoprotein clearance through the uptake of chylomicrons, VLDLs, and HDLs by hepatocytes. APOE is also involved in the biosynthesis by the liver of VLDLs as well as their uptake by peripheral tissues ensuring the delivery of triglycerides and energy storage in muscle, heart and adipose tissues. By participating in the lipoprotein-mediated distribution of lipids among tissues, APOE plays a critical role in plasma and tissues lipid homeostasis. APOE is also involved in two steps of reverse cholesterol transport, the HDLs-mediated transport of cholesterol from peripheral tissues to the liver, and thereby plays an important role in cholesterol homeostasis. First, it is functionally associated with ABCA1 in the biogenesis of HDLs in tissues. Second, it is enriched in circulating HDLs and mediates their uptake by hepatocytes. APOE also plays an important role in lipid transport in the central nervous system, regulating neuron survival and sprouting. This is Apolipoprotein E (APOE) from Saimiri sciureus (Common squirrel monkey).